Here is a 264-residue protein sequence, read N- to C-terminus: Acyl-[acyl-carrier-protein]--UDP-N-acetylglucosamine O-acyltransferase (264 aa).

This sequence belongs to the transferase hexapeptide repeat family. LpxA subfamily. Homotrimer.

The protein localises to the cytoplasm. It catalyses the reaction a (3R)-hydroxyacyl-[ACP] + UDP-N-acetyl-alpha-D-glucosamine = a UDP-3-O-[(3R)-3-hydroxyacyl]-N-acetyl-alpha-D-glucosamine + holo-[ACP]. It functions in the pathway glycolipid biosynthesis; lipid IV(A) biosynthesis; lipid IV(A) from (3R)-3-hydroxytetradecanoyl-[acyl-carrier-protein] and UDP-N-acetyl-alpha-D-glucosamine: step 1/6. Functionally, involved in the biosynthesis of lipid A, a phosphorylated glycolipid that anchors the lipopolysaccharide to the outer membrane of the cell. This Haemophilus ducreyi (strain 35000HP / ATCC 700724) protein is Acyl-[acyl-carrier-protein]--UDP-N-acetylglucosamine O-acyltransferase.